The sequence spans 628 residues: Alpha-L-arabinofuranosidase A (628 aa).

The N-terminal stretch at 1-25 (MVAFSALSGVSAVSLLLSLVQNAHG) is a signal peptide. Residues asparagine 36, asparagine 51, asparagine 74, asparagine 152, asparagine 171, asparagine 260, asparagine 359, asparagine 440, asparagine 493, and asparagine 610 are each glycosylated (N-linked (GlcNAc...) asparagine).

Belongs to the glycosyl hydrolase 51 family.

It catalyses the reaction Hydrolysis of terminal non-reducing alpha-L-arabinofuranoside residues in alpha-L-arabinosides.. It functions in the pathway glycan metabolism; L-arabinan degradation. Acts only on small linear 1,5-alpha-linked L-arabinofuranosyl oligosaccharides. In Aspergillus niger, this protein is Alpha-L-arabinofuranosidase A (abfA).